We begin with the raw amino-acid sequence, 372 residues long: Probable butyrate kinase (372 aa).

This sequence belongs to the acetokinase family.

Its subcellular location is the cytoplasm. The enzyme catalyses butanoate + ATP = butanoyl phosphate + ADP. The sequence is that of Probable butyrate kinase from Oleidesulfovibrio alaskensis (strain ATCC BAA-1058 / DSM 17464 / G20) (Desulfovibrio alaskensis).